Reading from the N-terminus, the 377-residue chain is N-acetyldiaminopimelate deacetylase (377 aa).

Aspartate 69 is a catalytic residue. Catalysis depends on glutamate 128, which acts as the Proton acceptor.

Belongs to the peptidase M20A family. N-acetyldiaminopimelate deacetylase subfamily.

It catalyses the reaction N-acetyl-(2S,6S)-2,6-diaminopimelate + H2O = (2S,6S)-2,6-diaminopimelate + acetate. Its pathway is amino-acid biosynthesis; L-lysine biosynthesis via DAP pathway; LL-2,6-diaminopimelate from (S)-tetrahydrodipicolinate (acetylase route): step 3/3. Functionally, catalyzes the conversion of N-acetyl-diaminopimelate to diaminopimelate and acetate. The polypeptide is N-acetyldiaminopimelate deacetylase (Streptococcus gordonii (strain Challis / ATCC 35105 / BCRC 15272 / CH1 / DL1 / V288)).